A 190-amino-acid chain; its full sequence is Negative regulator YfiR (190 aa).

Position 60 (Arg60) interacts with GMP. 2 cysteine pairs are disulfide-bonded: Cys71–Cys110 and Cys145–Cys152. Residues Arg175 and His177 each contribute to the GMP site.

Homodimer. Interacts with TpbB/YfiN. Interacts with YfiB. The YfiB-YfiR complex is a 2:2 heterotetramer. Post-translationally, cys-71 and Cys-110 form a disulfide bond in the oxidized form but maintain their free form in the non-oxidized YfiR structure. The Cys-145-Cys-152 disulfide bond is well formed in both structures. The Cys145-Cys152 disulfide bond, but not Cys-71-Cys-110, plays an important role in maintaining the correct folding of the protein.

The protein localises to the periplasm. With respect to regulation, tpbB/YfiN repression is released through an YfiB-dependent sequestration of YfiR to the outer membrane. Binds vitamin B6 (VB6) or L-Trp at the periphery of the dimer, and both VB6 and L-Trp are able to reduce biofilm formation induced by YfiB L43P mutant. However, VB6 or L-Trp alone may have little effects in interrupting the YfiB-YfiR interaction. GMP enhances the binding affinity between YfiB and YfiR. Negatively regulates the activity of the diguanylate cyclase TpbB/YfiN, leading to decreased c-di-GMP production. Inhibits TpbB/YfiN allosterically, through a hydrophobic interaction between the C-terminus of YfiR and a conserved region of the periplasmic PAS domain of TpbB/YfiN. Under reducing conditions, may also act as an YfiB-independent sensing device that is able to activate TpbB/YfiN in response to the redox status of the periplasm. Functionally, part of the YfiB-TpbB-YfiR (or yfiBNR) system, encoding a tripartite signaling module that modulates intracellular c-di-GMP levels. The system is a key regulator of the small colony variant (SCV) phenotype, and plays an important role in biofilm formation and in vivo persistence. The c-di-GMP produced by TpbB/YfiN stimulates the production of the Pel and Psl exopolysaccharides, which promotes surface attachment, generates an SCV phenotype and confers resistance against phagocytosis. The chain is Negative regulator YfiR from Pseudomonas aeruginosa (strain ATCC 15692 / DSM 22644 / CIP 104116 / JCM 14847 / LMG 12228 / 1C / PRS 101 / PAO1).